The primary structure comprises 147 residues: Protein phosphatase 1 regulatory subunit 14A (147 aa).

The span at 1–11 shows a compositional bias: basic residues; the sequence is MAAQRLGKRVL. The tract at residues 1–37 is disordered; the sequence is MAAQRLGKRVLSKLQSPSRARGPGGSPSGLQKRHARV. Residue S26 is modified to Phosphoserine. The interval 35–120 is inhibitory; that stretch reads ARVTVKYDRR…LLAKLRGLHK (86 aa). Phosphothreonine is present on T38. Positions 118–147 are disordered; sequence LHKQPGFPQPSPSDDPSLSPRQDPAHTAPP. Phosphoserine occurs at positions 128, 134, and 136.

The protein belongs to the PP1 inhibitor family.

The protein localises to the cytoplasm. Inhibitor of PPP1CA. Has over 1000-fold higher inhibitory activity when phosphorylated, creating a molecular switch for regulating the phosphorylation status of PPP1CA substrates and smooth muscle contraction. The chain is Protein phosphatase 1 regulatory subunit 14A (Ppp1r14a) from Rattus norvegicus (Rat).